Consider the following 298-residue polypeptide: Bifunctional protein FolD (298 aa).

NADP(+)-binding positions include 167–169, serine 192, and valine 233; that span reads GRS.

This sequence belongs to the tetrahydrofolate dehydrogenase/cyclohydrolase family. Homodimer.

The catalysed reaction is (6R)-5,10-methylene-5,6,7,8-tetrahydrofolate + NADP(+) = (6R)-5,10-methenyltetrahydrofolate + NADPH. The enzyme catalyses (6R)-5,10-methenyltetrahydrofolate + H2O = (6R)-10-formyltetrahydrofolate + H(+). It functions in the pathway one-carbon metabolism; tetrahydrofolate interconversion. Functionally, catalyzes the oxidation of 5,10-methylenetetrahydrofolate to 5,10-methenyltetrahydrofolate and then the hydrolysis of 5,10-methenyltetrahydrofolate to 10-formyltetrahydrofolate. The chain is Bifunctional protein FolD from Chelativorans sp. (strain BNC1).